Here is a 118-residue protein sequence, read N- to C-terminus: Large ribosomal subunit protein bL20c (118 aa).

Belongs to the bacterial ribosomal protein bL20 family.

The protein localises to the plastid. Its function is as follows. Binds directly to 23S ribosomal RNA and is necessary for the in vitro assembly process of the 50S ribosomal subunit. It is not involved in the protein synthesizing functions of that subunit. The sequence is that of Large ribosomal subunit protein bL20c from Aneura mirabilis (Parasitic liverwort).